The sequence spans 200 residues: Rho GDP-dissociation inhibitor 2 (200 aa).

The segment at Met1 to Lys39 is disordered. Thr2 bears the N-acetylthreonine mark. N6-acetyllysine is present on Lys20. The residue at position 23 (Tyr23) is a Phosphotyrosine. N6-acetyllysine is present on residues Lys24, Lys39, Lys46, Lys101, and Lys123. Basic and acidic residues predominate over residues Ser30 to Lys39. Ser144 is modified (phosphoserine). At Lys174 the chain carries N6-acetyllysine.

The protein belongs to the Rho GDI family. Interacts with RHOA. Interacts with RAC1. Interacts with RAC2. Interacts with CDC42. As to expression, preferentially expressed in hematopoietic cells.

The protein resides in the cytoplasm. The protein localises to the cytosol. Functionally, regulates the GDP/GTP exchange reaction of the Rho proteins by inhibiting the dissociation of GDP from them, and the subsequent binding of GTP to them. Regulates reorganization of the actin cytoskeleton mediated by Rho family members. In Mus musculus (Mouse), this protein is Rho GDP-dissociation inhibitor 2 (Arhgdib).